The sequence spans 230 residues: Cytochrome c oxidase subunit 2 (230 aa).

Residues 1–14 (MAHPSQLGFQDAAS) are Mitochondrial intermembrane-facing. Residues 15 to 45 (PVMEELLHFHDHALMIVFLISTLVLYIIVAM) traverse the membrane as a helical segment. The Mitochondrial matrix segment spans residues 46–59 (VSTKLTNKYILDSQ). The chain crosses the membrane as a helical span at residues 60 to 87 (EIEIIWTVLPAVILILIALPSLRILYLM). At 88–230 (DEINDPHLTI…SWSSLMLEDA (143 aa)) the chain is on the mitochondrial intermembrane side. Positions 161, 196, 198, 200, 204, and 207 each coordinate Cu cation. A Mg(2+)-binding site is contributed by E198.

It belongs to the cytochrome c oxidase subunit 2 family. As to quaternary structure, component of the cytochrome c oxidase (complex IV, CIV), a multisubunit enzyme composed of 14 subunits. The complex is composed of a catalytic core of 3 subunits MT-CO1, MT-CO2 and MT-CO3, encoded in the mitochondrial DNA, and 11 supernumerary subunits COX4I, COX5A, COX5B, COX6A, COX6B, COX6C, COX7A, COX7B, COX7C, COX8 and NDUFA4, which are encoded in the nuclear genome. The complex exists as a monomer or a dimer and forms supercomplexes (SCs) in the inner mitochondrial membrane with NADH-ubiquinone oxidoreductase (complex I, CI) and ubiquinol-cytochrome c oxidoreductase (cytochrome b-c1 complex, complex III, CIII), resulting in different assemblies (supercomplex SCI(1)III(2)IV(1) and megacomplex MCI(2)III(2)IV(2)). Found in a complex with TMEM177, COA6, COX18, COX20, SCO1 and SCO2. Interacts with TMEM177 in a COX20-dependent manner. Interacts with COX20. Interacts with COX16. Requires Cu cation as cofactor.

It localises to the mitochondrion inner membrane. It catalyses the reaction 4 Fe(II)-[cytochrome c] + O2 + 8 H(+)(in) = 4 Fe(III)-[cytochrome c] + 2 H2O + 4 H(+)(out). Component of the cytochrome c oxidase, the last enzyme in the mitochondrial electron transport chain which drives oxidative phosphorylation. The respiratory chain contains 3 multisubunit complexes succinate dehydrogenase (complex II, CII), ubiquinol-cytochrome c oxidoreductase (cytochrome b-c1 complex, complex III, CIII) and cytochrome c oxidase (complex IV, CIV), that cooperate to transfer electrons derived from NADH and succinate to molecular oxygen, creating an electrochemical gradient over the inner membrane that drives transmembrane transport and the ATP synthase. Cytochrome c oxidase is the component of the respiratory chain that catalyzes the reduction of oxygen to water. Electrons originating from reduced cytochrome c in the intermembrane space (IMS) are transferred via the dinuclear copper A center (CU(A)) of subunit 2 and heme A of subunit 1 to the active site in subunit 1, a binuclear center (BNC) formed by heme A3 and copper B (CU(B)). The BNC reduces molecular oxygen to 2 water molecules using 4 electrons from cytochrome c in the IMS and 4 protons from the mitochondrial matrix. This is Cytochrome c oxidase subunit 2 (mt-co2) from Gadus morhua (Atlantic cod).